Here is a 590-residue protein sequence, read N- to C-terminus: MASLREATLRKLRRFSELRGKPVAAGEFWDVVAITAADEKQELAYKQQLSEKLKKRELPLGVQYHVFPDPAGTKIGNGGSTLCSLECLESLCGDKWNSLKVLLIHSGGYSQRLPNASALGKIFTALPLGEPIYQMLELKLAMYVDFPSNMRPGVLVTCADDIELYSVGDSEYIAFDQPGFTALAHPSSLAVGTTHGVFVLHSDSSLQHGDLEYRQCYQFLHKPTIENMHRFNAVHRQRSFGQQNLSGGDTDCLPLHTEYVYTDSLFYMDHKSAKKLLDFYKSEGPLNCEIDAYGDFLQALGPGATAEYTRNTSHVTKEESQLLDMRQKIFHLLKGTPLNVVVLNNSRFYHIGTLQEYLLHFTSDSALKTELGLQSIAFSVSPSVPERSSGTACVIHSIVDSGCCVAPGSVVEYSRLGPEVSIGENCIISSSVIAKTVVPAYSFLCSLSVKINGHLKYSTMVFGMQDNLKNSVKTLEDIKALQFFGVCFLSCLDIWNLKATEKLFSGNKMNLSLWTACIFPVCSSLSESATASLGMLSAVRNHSPFNLSDFNLLSIQEMLVYKDVQDMLAYREHIFLEISSNKNQSDLEKS.

In terms of tissue distribution, expressed at highest levels in brain, moderately in testis, ovary and kidney, and weakly in liver, spleen, heart and lung.

Its subcellular location is the cytoplasm. The catalysed reaction is beta-L-fucose 1-phosphate + GTP + H(+) = GDP-beta-L-fucose + diphosphate. Catalyzes the formation of GDP-L-fucose from GTP and L-fucose-1-phosphate. Functions as a salvage pathway to reutilize L-fucose arising from the turnover of glycoproteins and glycolipids. The protein is Fucose-1-phosphate guanylyltransferase of Mus musculus (Mouse).